The sequence spans 85 residues: MSSGGLLLLLGLLTLWAELTPISSRERHPDCDKPPDTGRCGNNVRAFYYKPSTNKCVQFIYGGCNANGNHFKSDHLCRCQCREND.

The signal sequence occupies residues 1 to 24 (MSSGGLLLLLGLLTLWAELTPISS). In terms of domain architecture, BPTI/Kunitz inhibitor spans 31 to 81 (CDKPPDTGRCGNNVRAFYYKPSTNKCVQFIYGGCNANGNHFKSDHLCRCQC). Intrachain disulfides connect cysteine 31–cysteine 81, cysteine 40–cysteine 64, and cysteine 56–cysteine 77.

This sequence belongs to the venom Kunitz-type family. Heterodimer; disulfide-linked. The A chains have phospholipase A2 activity and the B chains show homology with the basic protease inhibitors. In terms of tissue distribution, expressed by the venom gland.

It localises to the secreted. In terms of biological role, beta-1-bungarotoxin is a presynaptic neurotoxin of the venom. The B chain is homologous to venom basic protease inhibitors but has no protease inhibitor activity and blocks voltage-gated potassium channels (Kv). This chain is Kunitz-type serine protease inhibitor homolog beta-bungarotoxin BF B2 chain, found in Bungarus fasciatus (Banded krait).